A 96-amino-acid chain; its full sequence is Citrate lyase acyl carrier protein (96 aa).

The residue at position 14 (Ser14) is an O-(phosphoribosyl dephospho-coenzyme A)serine.

This sequence belongs to the CitD family. Oligomer with a subunit composition of (alpha,beta,gamma)6.

It is found in the cytoplasm. Its function is as follows. Covalent carrier of the coenzyme of citrate lyase. This chain is Citrate lyase acyl carrier protein, found in Pectobacterium atrosepticum (strain SCRI 1043 / ATCC BAA-672) (Erwinia carotovora subsp. atroseptica).